The sequence spans 289 residues: Glycine--tRNA ligase alpha subunit (289 aa).

Belongs to the class-II aminoacyl-tRNA synthetase family. In terms of assembly, tetramer of two alpha and two beta subunits.

Its subcellular location is the cytoplasm. It carries out the reaction tRNA(Gly) + glycine + ATP = glycyl-tRNA(Gly) + AMP + diphosphate. This Rickettsia felis (strain ATCC VR-1525 / URRWXCal2) (Rickettsia azadi) protein is Glycine--tRNA ligase alpha subunit.